Consider the following 417-residue polypeptide: MASSKLREPVDEVFDLDLAVPETARLDSSLHKARAQLLAKGRRHRPSRSRLRDSASSAEDGEGSDGPGGKVTDGCGSPLHRLRSPLHSGPGSPAGGSFCLDPPGLRRSLDEDEPPPSPLTRYRPLHNAASHEGLAAASCSPPRSAPSSDSSPSFVRRHPRAEPHSEDDSRDASPPEPASPTIGLDKKTRRKFLDLGVTLRRASTGKSRKEKGSNRLSMGSRESVEGSGRSGGSPFLPFSWFTDSGKGSASSGSTTSPTCSPKHEGFSPKKSASQESTLSDDSTPPSSSPKIPSGPWQEAKCSYPYHTLSQSSDEFLDEPLPPVHHWTSQQVGQWLQSLNLEQYAAEFAARQVDGPQLLQLDGSKLKSLGLSNSHDRALVKRKLKEMAAAAEKERKAQEKAARQREKLRRREQEAKKS.

Disordered regions lie at residues 37 to 299 (LLAK…WQEA) and 388 to 417 (AAAE…AKKS). The span at 40–49 (KGRRHRPSRS) shows a compositional bias: basic residues. Phosphoserine is present on residues Ser-84 and Ser-108. The segment covering 135-153 (AAASCSPPRSAPSSDSSPS) has biased composition (low complexity). Residues 160–173 (RAEPHSEDDSRDAS) show a composition bias toward basic and acidic residues. Phosphoserine is present on residues Ser-173 and Ser-179. Composition is skewed to low complexity over residues 244 to 260 (SGKG…PTCS) and 276 to 295 (STLS…PSGP). At Ser-279 the chain carries Phosphoserine. Thr-283 carries the phosphothreonine modification. The SAM domain occupies 326 to 389 (WTSQQVGQWL…KRKLKEMAAA (64 aa)). A coiled-coil region spans residues 377–417 (ALVKRKLKEMAAAAEKERKAQEKAARQREKLRRREQEAKKS). The segment covering 390-417 (AEKERKAQEKAARQREKLRRREQEAKKS) has biased composition (basic and acidic residues).

The chain is Sterile alpha motif domain-containing protein 14 (SAMD14) from Homo sapiens (Human).